Consider the following 950-residue polypeptide: Protocadherin alpha-9 (950 aa).

The signal sequence occupies residues 1-29 (MLYSSRGDPEGQPLLLSLLILAMWVVGSG). 6 Cadherin domains span residues 30 to 133 (QLHY…PPVF), 134 to 242 (PATQ…APVF), 243 to 350 (DRTL…APQL), 351 to 455 (TIKT…APAF), 456 to 565 (AQPE…APAL), and 588 to 678 (GVVV…APKS). The Extracellular segment spans residues 30 to 697 (QLHYSVPEEA…GPEVTLVDVN (668 aa)). Residues Asn254 and Asn265 are each glycosylated (N-linked (GlcNAc...) asparagine). Asn548 carries N-linked (GlcNAc...) asparagine glycosylation. Residues 698-718 (VYLIIAICAVSSLLVLTLLLY) traverse the membrane as a helical segment. The Cytoplasmic segment spans residues 719–950 (TVLRCSAMPT…GNSTTDNSDQ (232 aa)). A PXXP 1 repeat occupies 734-737 (PGKP). Residues 734–894 (PGKPTLVCSS…PDKFIIPGSP (161 aa)) are 5 X 4 AA repeats of P-X-X-P. Disordered stretches follow at residues 759 to 808 (CSGE…DWRY) and 827 to 950 (ILRA…NSDQ). Residues 789–798 (PSASSDSSGK) show a composition bias toward polar residues. PXXP repeat units lie at residues 799–802 (PRQP), 832–835 (PGGP), 873–876 (PGNP), and 891–894 (PGSP). The segment covering 909–923 (DKSDFITFGKKEETK) has biased composition (basic and acidic residues).

Its subcellular location is the cell membrane. Functionally, potential calcium-dependent cell-adhesion protein. May be involved in the establishment and maintenance of specific neuronal connections in the brain. The sequence is that of Protocadherin alpha-9 (PCDHA9) from Pan troglodytes (Chimpanzee).